The primary structure comprises 413 residues: ATP phosphoribosyltransferase 2, chloroplastic (413 aa).

The N-terminal 57 residues, Met1–Val57, are a transit peptide targeting the chloroplast.

Belongs to the ATP phosphoribosyltransferase family. Long subfamily. Mg(2+) is required as a cofactor.

It localises to the plastid. Its subcellular location is the chloroplast. It catalyses the reaction 1-(5-phospho-beta-D-ribosyl)-ATP + diphosphate = 5-phospho-alpha-D-ribose 1-diphosphate + ATP. Its pathway is amino-acid biosynthesis; L-histidine biosynthesis; L-histidine from 5-phospho-alpha-D-ribose 1-diphosphate: step 1/9. Its activity is regulated as follows. Feedback inhibited by L-histidine. In terms of biological role, catalyzes the condensation of ATP and 5-phosphoribose 1-diphosphate to form N'-(5'-phosphoribosyl)-ATP (PR-ATP). In Arabidopsis thaliana (Mouse-ear cress), this protein is ATP phosphoribosyltransferase 2, chloroplastic (HISN1B).